The following is a 295-amino-acid chain: WHI2-like protein P4H10.16c (295 aa).

Belongs to the WHI2 family.

The protein localises to the cytoplasm. It localises to the nucleus. This Schizosaccharomyces pombe (strain 972 / ATCC 24843) (Fission yeast) protein is WHI2-like protein P4H10.16c.